The following is a 185-amino-acid chain: MAEAKYEPRLKKEYVERIRKAMQEKFSYANEMMIPKLDKIVINMGVGEATADSKKPTVAAADLAAIAGQKPVITRARNSIAGFKVRENMPIGAKVTLRGARMYEFLDRLVNIALPRVRDFRGLNPKSFDGRGNFAMGIKEHIVFPEINYDKVDQMWGMDIIVCTTATTDDEARTLLKEFSFPFRQ.

This sequence belongs to the universal ribosomal protein uL5 family. Part of the 50S ribosomal subunit; part of the 5S rRNA/L5/L18/L25 subcomplex. Contacts the 5S rRNA and the P site tRNA. Forms a bridge to the 30S subunit in the 70S ribosome.

In terms of biological role, this is one of the proteins that bind and probably mediate the attachment of the 5S RNA into the large ribosomal subunit, where it forms part of the central protuberance. In the 70S ribosome it contacts protein S13 of the 30S subunit (bridge B1b), connecting the 2 subunits; this bridge is implicated in subunit movement. Contacts the P site tRNA; the 5S rRNA and some of its associated proteins might help stabilize positioning of ribosome-bound tRNAs. In Rhizobium etli (strain ATCC 51251 / DSM 11541 / JCM 21823 / NBRC 15573 / CFN 42), this protein is Large ribosomal subunit protein uL5.